The sequence spans 113 residues: Endoribonuclease SymE (113 aa).

The SpoVT-AbrB domain maps to 29 to 74; it reads SRYPDYSRIPAITLKGQWLEAAGFATGTAVDVKVMEGCIVLTAQPP.

Belongs to the SymE family.

The protein resides in the cytoplasm. Its function is as follows. Involved in the degradation and recycling of damaged RNA. It is itself a target for degradation by the ATP-dependent protease Lon. The protein is Endoribonuclease SymE of Escherichia coli (strain K12 / MC4100 / BW2952).